A 155-amino-acid chain; its full sequence is Small ribosomal subunit protein uS7 (155 aa).

Belongs to the universal ribosomal protein uS7 family. As to quaternary structure, part of the 30S ribosomal subunit. Contacts proteins S9 and S11.

Functionally, one of the primary rRNA binding proteins, it binds directly to 16S rRNA where it nucleates assembly of the head domain of the 30S subunit. Is located at the subunit interface close to the decoding center, probably blocks exit of the E-site tRNA. The sequence is that of Small ribosomal subunit protein uS7 from Xanthomonas axonopodis pv. citri (strain 306).